A 315-amino-acid polypeptide reads, in one-letter code: MLDFEKPLFEIKNKIESLKQSQEKNDVDLQDEIDLLEASLERETKKIYTNLKPWDRVQIARLQERPTTLDYIPYIFDSFIELHGDRNFRDDPAMIGGIGYLNGTPVTVIGQQRGKDTKDNIYRNFGMAHPEGYRKALRLMKQAEKFNRPIFTFIDTKGAYPGKAAEERGQSESIARNLVEMASLKVPVIAIVIGEGGSGGALGIGIANRIMMLENSTYSVISPEGAAALLWKDSSLAKMAAETMKITAKDLHHLNVIDSVIDEPLGGAHNNIEQQAIDIKQAFVDQLEQLQQQSADELVEDRFNKFRNIGAFIEK.

Residues 32-289 (EIDLLEASLE…KQAFVDQLEQ (258 aa)) enclose the CoA carboxyltransferase C-terminal domain.

The protein belongs to the AccA family. In terms of assembly, acetyl-CoA carboxylase is a heterohexamer composed of biotin carboxyl carrier protein (AccB), biotin carboxylase (AccC) and two subunits each of ACCase subunit alpha (AccA) and ACCase subunit beta (AccD).

Its subcellular location is the cytoplasm. The enzyme catalyses N(6)-carboxybiotinyl-L-lysyl-[protein] + acetyl-CoA = N(6)-biotinyl-L-lysyl-[protein] + malonyl-CoA. It functions in the pathway lipid metabolism; malonyl-CoA biosynthesis; malonyl-CoA from acetyl-CoA: step 1/1. Component of the acetyl coenzyme A carboxylase (ACC) complex. First, biotin carboxylase catalyzes the carboxylation of biotin on its carrier protein (BCCP) and then the CO(2) group is transferred by the carboxyltransferase to acetyl-CoA to form malonyl-CoA. The chain is Acetyl-coenzyme A carboxylase carboxyl transferase subunit alpha from Staphylococcus haemolyticus (strain JCSC1435).